The chain runs to 185 residues: Phosphatidylglycerophosphatase GEP4, mitochondrial (185 aa).

The Phosphoryl acceptor signature appears at 45–49 (DKDNC).

This sequence belongs to the GEP4 family.

Its subcellular location is the mitochondrion inner membrane. The enzyme catalyses a 1,2-diacyl-sn-glycero-3-phospho-(1'-sn-glycero-3'-phosphate) + H2O = a 1,2-diacyl-sn-glycero-3-phospho-(1'-sn-glycerol) + phosphate. Its pathway is phospholipid metabolism; phosphatidylglycerol biosynthesis; phosphatidylglycerol from CDP-diacylglycerol: step 2/2. Phosphatidylglycerophosphatase involved in the biosynthesis of cardiolipin (CL), a unique dimeric phosphoglycerolipid predominantly present in mitochondrial membranes and which has important functions for cellular energy metabolism, mitochondrial dynamics and the initiation of apoptotic pathways. Required for the stability of respiratory chain supercomplexes and for growth at elevated temperature, in presence of ethidium bromide or in absence of prohibitins. The chain is Phosphatidylglycerophosphatase GEP4, mitochondrial (GEP4) from Saccharomyces cerevisiae (strain ATCC 204508 / S288c) (Baker's yeast).